We begin with the raw amino-acid sequence, 529 residues long: Beta-galactoside alpha-2,6-sialyltransferase 2 (529 aa).

The Cytoplasmic segment spans residues 1 to 11 (MKPHLKQWRQR). A helical; Signal-anchor for type II membrane protein transmembrane segment spans residues 12–32 (MLFGIFAWGLLFLLIFIYFTD). The Lumenal segment spans residues 33–529 (SNPAEPVPSS…PAPSPVIPHS (497 aa)). S69 carries O-linked (GalNAc...) serine glycosylation. N211 carries an N-linked (GlcNAc...) asparagine glycan. Cystine bridges form between C253/C519, C296/C448, and C466/C477.

This sequence belongs to the glycosyltransferase 29 family. O-glycosylated. Weakly expressed in some tissues, such as small intestine, colon and fetal brain.

The protein resides in the golgi apparatus. It localises to the golgi stack membrane. It catalyses the reaction a beta-D-galactoside + CMP-N-acetyl-beta-neuraminate = an N-acetyl-alpha-neuraminyl-(2-&gt;6)-beta-D-galactosyl derivative + CMP + H(+). Transfers sialic acid from the donor of substrate CMP-sialic acid to galactose containing acceptor substrates. Has alpha-2,6-sialyltransferase activity toward oligosaccharides that have the Gal-beta-1,4-GlcNAc sequence at the non-reducing end of their carbohydrate groups, but it has weak or no activities toward glycoproteins and glycolipids. This Homo sapiens (Human) protein is Beta-galactoside alpha-2,6-sialyltransferase 2 (ST6GAL2).